Consider the following 86-residue polypeptide: Allergen Api g 5 (86 aa).

Residue Asn-62 is glycosylated (N-linked (GlcNAc...) asparagine).

It belongs to the oxygen-dependent FAD-linked oxidoreductase family. Requires FAD as cofactor. Carries MUXF and MMXF, two complex N-linked glycans with alpha-1,3-fucose and beta-1,2-xylose residues in their structures. MMXF is added to Asn-62.

The sequence is that of Allergen Api g 5 from Apium graveolens (Celery).